The sequence spans 255 residues: Small ribosomal subunit protein uS2 (255 aa).

It belongs to the universal ribosomal protein uS2 family.

In Geotalea daltonii (strain DSM 22248 / JCM 15807 / FRC-32) (Geobacter daltonii), this protein is Small ribosomal subunit protein uS2.